Reading from the N-terminus, the 298-residue chain is Cyclin-D4-2 (298 aa).

It belongs to the cyclin family. Cyclin D subfamily. In terms of assembly, interacts with CDKA-1 to form a kinase complex.

May promote cell division. The chain is Cyclin-D4-2 (CYCD4-2) from Arabidopsis thaliana (Mouse-ear cress).